Here is an 881-residue protein sequence, read N- to C-terminus: Plakophilin-2 (881 aa).

Residues 1–348 (MAAPGAPAEY…FTDSQLGNAD (348 aa)) are required for interaction with influenza A virus RNA polymerase subunit PB1. Residues 1 to 360 (MAAPGAPAEY…MTLERAVSML (360 aa)) form a required for binding to single-stranded DNA region. At S44 the chain carries Phosphoserine. R46 bears the Omega-N-methylarginine mark. S82 bears the Phosphoserine; by MARK3 mark. A phosphoserine mark is found at S132, S135, S151, S154, S155, S169, and S172. T177 carries the phosphothreonine modification. S183, S197, S251, S294, and S329 each carry phosphoserine. Residues 282–314 (QNRASRSSWHQSSFHSTRTLREAGPSVAVDSSG) are disordered. The span at 286–297 (SRSSWHQSSFHS) shows a compositional bias: low complexity. 8 ARM repeats span residues 341–383 (DSQL…ECFQ), 385–424 (SEAR…NLVF), 427–467 (NDNK…NLRS), 571–616 (DGRK…NLSY), 671–711 (PKGV…NLTA), 719–758 (SVAQ…NLSR), 763–804 (QNEI…NIIQ), and 807–849 (YQNA…SLWA).

It belongs to the beta-catenin family. As to quaternary structure, interacts with DSC2. Interacts with JUP. Interacts with KRT5/CK5, KRT8/CK8, KRT14/CK14, KRT18/CK18 and VIM. Interacts (via N-terminus) with MARK3/C-TAK1. Interacts with DSP. Interacts with DSG1, DSG2 and DSG3. Interacts (via N-terminus) with CTNNB1. Interacts with CDH1. Interacts with the RNA polymerase III (Pol III) complex proteins POLR3A/RPC155, POLR3F/RPC39 and POLR3C/RPC82. Interacts with CTNNA3. Interacts (via N-terminus) with SCN5A/Nav1.5. Interacts with ANK3/ANKG and GJA1/CX43. In terms of assembly, (Microbial infection) Interacts (via N-terminus) with influenza A virus RNA polymerase subunit PB1 (via C-terminus); the interaction competitively inhibits the interaction between the subunits PB1 and PB2. As to expression, expressed at intercalated disks in the heart (at protein level). Expressed in gingival epithelial, endothelial and fibroblast cells (at protein level). Faintly expressed in tracheal epithelial cells (at protein level). Widely expressed. Found at desmosomal plaques in simple and stratified epithelia and in non-epithelial tissues such as myocardium and lymph node follicles. In most stratified epithelia found in the desmosomes of the basal cell layer and seems to be absent from suprabasal strata. (Microbial infection) Abundantly expressed in tracheal epithelial cells following influenza A virus infection (at protein level).

Its subcellular location is the nucleus. The protein localises to the cell junction. It localises to the desmosome. The protein resides in the cytoplasm. Its function is as follows. A component of desmosome cell-cell junctions which are required for positive regulation of cellular adhesion. Regulates focal adhesion turnover resulting in changes in focal adhesion size, cell adhesion and cell spreading, potentially via transcriptional modulation of beta-integrins. Required to maintain gingival epithelial barrier function. Important component of the desmosome that is also required for localization of desmosome component proteins such as DSC2, DSG2 and JUP to the desmosome cell-cell junction. Required for the formation of desmosome cell junctions in cardiomyocytes, thereby required for the correct formation of the heart, specifically trabeculation and formation of the atria walls. Loss of desmosome cell junctions leads to mis-localization of DSP and DSG2 resulting in disruption of cell-cell adhesion and disordered intermediate filaments. Modulates profibrotic gene expression in cardiomyocytes via regulation of DSP expression and subsequent activation of downstream TGFB1 and MAPK14/p38 MAPK signaling. Required for cardiac sodium current propagation and electrical synchrony in cardiac myocytes, via ANK3 stabilization and modulation of SCN5A/Nav1.5 localization to cell-cell junctions. Required for mitochondrial function, nuclear envelope integrity and positive regulation of SIRT3 transcription via maintaining DES localization at its nuclear envelope and cell tip anchoring points, and thereby preserving regulation of the transcriptional program. Maintenance of nuclear envelope integrity protects against DNA damage and transcriptional dysregulation of genes, especially those involved in the electron transport chain, thereby preserving mitochondrial function and protecting against superoxide radical anion generation. Binds single-stranded DNA (ssDNA). May regulate the localization of GJA1 to gap junctions in intercalated disks of the heart. Involved in the inhibition of viral infection by influenza A viruses (IAV). Acts as a host restriction factor for IAV viral propagation, potentially via disrupting the interaction of IAV polymerase complex proteins. In Homo sapiens (Human), this protein is Plakophilin-2.